The following is a 190-amino-acid chain: Adenylate kinase (190 aa).

12–17 contacts ATP; that stretch reads GSGKTT. An NMP region spans residues 33 to 62; that stretch reads STGDLLRAEVASGSELGKTIDSFISKGNLV. AMP-binding positions include T34, R39, 60–62, 87–90, and Q94; these read NLV and GYPR. Residues 129–135 form an LID region; it reads GRARGAD. An ATP-binding site is contributed by R130. Positions 132 and 144 each coordinate AMP. ATP is bound at residue R172.

This sequence belongs to the adenylate kinase family. In terms of assembly, monomer.

The protein resides in the cytoplasm. It carries out the reaction AMP + ATP = 2 ADP. The protein operates within purine metabolism; AMP biosynthesis via salvage pathway; AMP from ADP: step 1/1. In terms of biological role, catalyzes the reversible transfer of the terminal phosphate group between ATP and AMP. Plays an important role in cellular energy homeostasis and in adenine nucleotide metabolism. This Campylobacter lari (strain RM2100 / D67 / ATCC BAA-1060) protein is Adenylate kinase.